The sequence spans 119 residues: uncharacterized protein (119 aa).

Positions 1-23 are cleaved as a signal peptide; it reads MVKWAVSILVNALLLIVIDGYID. A run of 3 helical transmembrane segments spans residues 27–47, 50–70, and 88–108; these read ISSI…NVLI, LLII…LFVI, and IDGF…HLLI.

The protein localises to the cell membrane. This is an uncharacterized protein from Bacillus subtilis (strain 168).